The sequence spans 117 residues: Large ribosomal subunit protein uL22 (117 aa).

Belongs to the universal ribosomal protein uL22 family. In terms of assembly, part of the 50S ribosomal subunit.

In terms of biological role, this protein binds specifically to 23S rRNA; its binding is stimulated by other ribosomal proteins, e.g. L4, L17, and L20. It is important during the early stages of 50S assembly. It makes multiple contacts with different domains of the 23S rRNA in the assembled 50S subunit and ribosome. The globular domain of the protein is located near the polypeptide exit tunnel on the outside of the subunit, while an extended beta-hairpin is found that lines the wall of the exit tunnel in the center of the 70S ribosome. The sequence is that of Large ribosomal subunit protein uL22 from Chlorobium phaeobacteroides (strain BS1).